A 245-amino-acid chain; its full sequence is Endonuclease III (245 aa).

Residues M119–G138 form the HhH domain. Residues C198, C205, C208, and C214 each contribute to the [4Fe-4S] cluster site.

It belongs to the Nth/MutY family. It depends on [4Fe-4S] cluster as a cofactor.

It catalyses the reaction 2'-deoxyribonucleotide-(2'-deoxyribose 5'-phosphate)-2'-deoxyribonucleotide-DNA = a 3'-end 2'-deoxyribonucleotide-(2,3-dehydro-2,3-deoxyribose 5'-phosphate)-DNA + a 5'-end 5'-phospho-2'-deoxyribonucleoside-DNA + H(+). In terms of biological role, DNA repair enzyme that has both DNA N-glycosylase activity and AP-lyase activity. The DNA N-glycosylase activity releases various damaged pyrimidines from DNA by cleaving the N-glycosidic bond, leaving an AP (apurinic/apyrimidinic) site. The AP-lyase activity cleaves the phosphodiester bond 3' to the AP site by a beta-elimination, leaving a 3'-terminal unsaturated sugar and a product with a terminal 5'-phosphate. Has a preference for oxidized pyrimidines, such as thymine glycol (prefers 5S isomers) 5,6-dihydrouracil:G, 5-hydroxyuracil:G, 5-hydroxycytosine:G and urea:A. Cleaves ssDNA containing an AP site. The polypeptide is Endonuclease III (Mycobacterium tuberculosis (strain ATCC 25618 / H37Rv)).